A 172-amino-acid chain; its full sequence is Translation initiation factor IF-3 (172 aa).

This sequence belongs to the IF-3 family. Monomer.

The protein localises to the cytoplasm. Its function is as follows. IF-3 binds to the 30S ribosomal subunit and shifts the equilibrium between 70S ribosomes and their 50S and 30S subunits in favor of the free subunits, thus enhancing the availability of 30S subunits on which protein synthesis initiation begins. This is Translation initiation factor IF-3 from Campylobacter fetus subsp. fetus (strain 82-40).